A 396-amino-acid polypeptide reads, in one-letter code: Probable sugar efflux transporter (396 aa).

12 helical membrane-spanning segments follow: residues 15–35 (VVTL…PVGL), 50–70 (VGIM…PFML), 81–101 (LICL…SWSF), 103–123 (VLVI…SITA), 136–156 (AQAL…GLPL), 170–190 (FFAI…LLPL), 209–229 (PALM…YTAY), 246–266 (FATA…VIFG), 275–295 (ALVS…LPAA), 299–319 (IHLG…GLGM), 333–353 (VAMA…ALVG), and 364–384 (MIGY…IIIF).

This sequence belongs to the major facilitator superfamily. SotB (TC 2.A.1.2) family.

Its subcellular location is the cell inner membrane. In terms of biological role, involved in the efflux of sugars. The physiological role may be the reduction of the intracellular concentration of toxic sugars or sugar metabolites. This is Probable sugar efflux transporter from Escherichia coli O127:H6 (strain E2348/69 / EPEC).